We begin with the raw amino-acid sequence, 150 residues long: UPF0178 protein AHA_0543 (150 aa).

It belongs to the UPF0178 family.

The protein is UPF0178 protein AHA_0543 of Aeromonas hydrophila subsp. hydrophila (strain ATCC 7966 / DSM 30187 / BCRC 13018 / CCUG 14551 / JCM 1027 / KCTC 2358 / NCIMB 9240 / NCTC 8049).